We begin with the raw amino-acid sequence, 200 residues long: LHFPL tetraspan subfamily member 6 protein (200 aa).

The signal sequence occupies residues 1–23; sequence MASSLTCTGVIWALLSFLSAATS. The next 3 membrane-spanning stretches (helical) occupy residues 84–104, 123–143, and 166–186; these read ICTIVTGLGCGLLLLVALTAL, GIQFLGGLLIGAGCALYPLGW, and IGWAYYCTGAGAAAAMLLCTW.

Belongs to the LHFP family.

It localises to the membrane. The sequence is that of LHFPL tetraspan subfamily member 6 protein from Mus musculus (Mouse).